Here is a 104-residue protein sequence, read N- to C-terminus: Large ribosomal subunit protein bL21 (104 aa).

It belongs to the bacterial ribosomal protein bL21 family. In terms of assembly, part of the 50S ribosomal subunit. Contacts protein L20.

Its function is as follows. This protein binds to 23S rRNA in the presence of protein L20. The chain is Large ribosomal subunit protein bL21 from Tropheryma whipplei (strain TW08/27) (Whipple's bacillus).